A 471-amino-acid polypeptide reads, in one-letter code: Uronate isomerase (471 aa).

It belongs to the metallo-dependent hydrolases superfamily. Uronate isomerase family.

It carries out the reaction D-glucuronate = D-fructuronate. The catalysed reaction is aldehydo-D-galacturonate = keto-D-tagaturonate. It participates in carbohydrate metabolism; pentose and glucuronate interconversion. The polypeptide is Uronate isomerase (Latilactobacillus sakei subsp. sakei (strain 23K) (Lactobacillus sakei subsp. sakei)).